A 255-amino-acid chain; its full sequence is 5'-nucleotidase SurE (255 aa).

Aspartate 8, aspartate 9, serine 39, and asparagine 91 together coordinate a divalent metal cation.

It belongs to the SurE nucleotidase family. The cofactor is a divalent metal cation.

It localises to the cytoplasm. It catalyses the reaction a ribonucleoside 5'-phosphate + H2O = a ribonucleoside + phosphate. In terms of biological role, nucleotidase that shows phosphatase activity on nucleoside 5'-monophosphates. The chain is 5'-nucleotidase SurE from Acinetobacter baumannii (strain AB0057).